Consider the following 391-residue polypeptide: Galactokinase (391 aa).

Position 34–37 (34–37) interacts with substrate; that stretch reads EHTD. Residue 121–127 coordinates ATP; the sequence is GAGLSSS. Residues S127 and E159 each coordinate Mg(2+). The Proton acceptor role is filled by D171. Y220 provides a ligand contact to substrate.

It belongs to the GHMP kinase family. GalK subfamily.

It localises to the cytoplasm. It catalyses the reaction alpha-D-galactose + ATP = alpha-D-galactose 1-phosphate + ADP + H(+). It functions in the pathway carbohydrate metabolism; galactose metabolism. Catalyzes the transfer of the gamma-phosphate of ATP to D-galactose to form alpha-D-galactose-1-phosphate (Gal-1-P). The sequence is that of Galactokinase from Roseiflexus sp. (strain RS-1).